The chain runs to 138 residues: Cysteine desulfuration protein SufE (138 aa).

Catalysis depends on Cys-51, which acts as the Cysteine persulfide intermediate.

This sequence belongs to the SufE family. Homodimer. Interacts with SufS.

The protein localises to the cytoplasm. It participates in cofactor biosynthesis; iron-sulfur cluster biosynthesis. In terms of biological role, participates in cysteine desulfuration mediated by SufS. Cysteine desulfuration mobilizes sulfur from L-cysteine to yield L-alanine and constitutes an essential step in sulfur metabolism for biosynthesis of a variety of sulfur-containing biomolecules. Functions as a sulfur acceptor for SufS, by mediating the direct transfer of the sulfur atom from the S-sulfanylcysteine of SufS, an intermediate product of cysteine desulfuration process. This Salmonella agona (strain SL483) protein is Cysteine desulfuration protein SufE.